Here is an 873-residue protein sequence, read N- to C-terminus: Leucine--tRNA ligase (873 aa).

A 'HIGH' region motif is present at residues 41 to 51 (PYPSGRIHMGH). Residues 645–649 (KMSKS) carry the 'KMSKS' region motif. Residue K648 participates in ATP binding.

This sequence belongs to the class-I aminoacyl-tRNA synthetase family.

It is found in the cytoplasm. It carries out the reaction tRNA(Leu) + L-leucine + ATP = L-leucyl-tRNA(Leu) + AMP + diphosphate. In Cereibacter sphaeroides (strain ATCC 17025 / ATH 2.4.3) (Rhodobacter sphaeroides), this protein is Leucine--tRNA ligase.